Consider the following 365-residue polypeptide: Phosphoserine aminotransferase (365 aa).

Arginine 40 serves as a coordination point for L-glutamate. Pyridoxal 5'-phosphate-binding positions include 74–75 (AS), phenylalanine 99, threonine 155, aspartate 177, and glutamine 200. The residue at position 201 (lysine 201) is an N6-(pyridoxal phosphate)lysine. 241–242 (NT) is a pyridoxal 5'-phosphate binding site.

Belongs to the class-V pyridoxal-phosphate-dependent aminotransferase family. SerC subfamily. Homodimer. The cofactor is pyridoxal 5'-phosphate.

Its subcellular location is the cytoplasm. The enzyme catalyses O-phospho-L-serine + 2-oxoglutarate = 3-phosphooxypyruvate + L-glutamate. It carries out the reaction 4-(phosphooxy)-L-threonine + 2-oxoglutarate = (R)-3-hydroxy-2-oxo-4-phosphooxybutanoate + L-glutamate. It functions in the pathway amino-acid biosynthesis; L-serine biosynthesis; L-serine from 3-phospho-D-glycerate: step 2/3. In terms of biological role, catalyzes the reversible conversion of 3-phosphohydroxypyruvate to phosphoserine and of 3-hydroxy-2-oxo-4-phosphonooxybutanoate to phosphohydroxythreonine. The chain is Phosphoserine aminotransferase from Lactococcus lactis subsp. lactis (strain IL1403) (Streptococcus lactis).